Here is a 1377-residue protein sequence, read N- to C-terminus: MDTSSVGGLELTDQTPVLLGSTAMATSLTNVGNSFSGPANPLVSRSNKFQNSSVEDDDDVVFIEPVQPPPPSVPVVADQRTITFTSSKNEELQGNDSKITPSSKELASQKGSVSETIVIDDEEDMETNQGQEKNSSNFIERRPPETKNRTNDVDFSTSSFSRSKVNAGMGNSGITTEPDSEIQIANVTTLETGVSSVNDGQLENTDGRDMNLMITHVTSLQNTNLGDVSNGLQSSNFGVNIQTYTPSLTSQTKTGVGPFNPGRMNVAGDVFQNGESATHHNPDSWISQSASFPRNQKQPGVDSLSPVASLPKQIFQPSAQQQPTKPVKVTCANCKKPLQKGQTAYQRKGSAHLFCSTTCLSSFSHKPAPKKLCVMCKKDITTMKGTIVAQVDSSESFQEFCSTSCLSLYEDKQNPTKGALNKSRCTICGKLTEIRHEVSFKNMTHKLCSDHCFNRYRMANGLIMNCCEQCGEYLPSKGAGNNVLVIDGQQKRFCCQSCVSEYKQVGSHPSFLKEVRDHMQDSFLMQPEKYGKLTTCTGCRTQCRFFDMTQCIGPNGYMEPYCSTACMNSHKTKYAKSQSLGIICHFCKRNSLPQYQTTMPDGKLYNFCNSSCVAKFQALSMQSSPNGQFVAPSDIQLKCNYCKNSFCSKPEILEWENKVHQFCSKTCSDDYKKLHCIVTYCEYCQEEKTLHETVNFSGVKRPFCSEGCKLLYKQDFARRLGLRCVTCNYCSQLCKKGATKELDGVVRDFCSEDCCKKFQDWYYKAARCDCCKSQGTLKERVQWRGEMKHFCDQHCLLRFYCQQNEPNMTTQKGPENLHYDQGCQTSRTKMTGSAPPPSPTPNKEMKNKAVLCKPLTMTKATYCKPHMQTKSCQTDDTWKTEYVPVPIPVPVYIPVPMHMYSQNIPVPTTVPVPVPVPVFLPAPLDSSEKIPAAIEELKSKVSSDALDTELLTMTDMMSEDEGKTETTNINSVIIETDIIGSDLLKNSDPETQSSMPDVPYEPDLDIEIDFPRAAEELDMENEFLLPPVFGEEYEEQPRPRSKKKGAKRKAVSGYQSHDDSSDNSECSFPFKYTYGVNAWKHWVKTRQLDEDLLVLDELKSSKSVKLKEDLLSHTTAELNYGLAHFVNEIRRPNGENYAPDSIYYLCLGIQEYLCGSNRKDNIFIDPGYQTFEQELNKILRSWQPSILPDGSIFSRVEEDYLWRIKQLGSHSPVALLNTLFYFNTKYFGLKTVEQHLRLSFGTVFRHWKKNPLTMENKACLRYQVSSLCGTDNEDKITTGKRKHEDDEPVFEQIENTANPSRCPVKMFECYLSKSPQNLNQRMDVFYLQPECSSSTDSPVWYTSTSLDRNTLENMLVRVLLVKDIYDKDNYELDEDTD.

Glycyl lysine isopeptide (Lys-Gly) (interchain with G-Cter in SUMO2) cross-links involve residues lysine 48, lysine 88, lysine 98, and lysine 104. Composition is skewed to polar residues over residues 85 to 115 (TSSK…SVSE) and 127 to 138 (TNQGQEKNSSNF). Positions 85–177 (TSSKNEELQG…GMGNSGITTE (93 aa)) are disordered. Positions 139-152 (IERRPPETKNRTND) are enriched in basic and acidic residues. Residue lysine 147 forms a Glycyl lysine isopeptide (Lys-Gly) (interchain with G-Cter in SUMO2) linkage. Residues 153 to 164 (VDFSTSSFSRSK) are compositionally biased toward polar residues. Serine 159 carries the phosphoserine modification. Glycyl lysine isopeptide (Lys-Gly) (interchain with G-Cter in SUMO2) cross-links involve residues lysine 253 and lysine 297. Residues 273-305 (NGESATHHNPDSWISQSASFPRNQKQPGVDSLS) are disordered. Over residues 284 to 298 (SWISQSASFPRNQKQ) the composition is skewed to polar residues. Serine 305 is subject to Phosphoserine. Residues lysine 312, lysine 325, lysine 348, and lysine 366 each participate in a glycyl lysine isopeptide (Lys-Gly) (interchain with G-Cter in SUMO2) cross-link. The MYM-type 1 zinc-finger motif lies at 327-363 (VKVTCANCKKPLQKGQTAYQRKGSAHLFCSTTCLSSF). Residues 369 to 409 (PKKLCVMCKKDITTMKGTIVAQVDSSESFQEFCSTSCLSLY) form an MYM-type 2 zinc finger. Glycyl lysine isopeptide (Lys-Gly) (interchain with G-Cter in SUMO2) cross-links involve residues lysine 417, lysine 441, lysine 491, lysine 503, lysine 513, lysine 529, and lysine 532. MYM-type zinc fingers lie at residues 421-456 (NKSR…FNRY) and 463-502 (IMNC…VSEY). The segment at 533–570 (LTTCTGCRTQCRFFDMTQCIGPNGYMEPYCSTACMNSH) adopts an MYM-type 5 zinc-finger fold. Residues lysine 576, lysine 603, lysine 649, lysine 658, lysine 688, lysine 700, and lysine 709 each participate in a glycyl lysine isopeptide (Lys-Gly) (interchain with G-Cter in SUMO2) cross-link. The MYM-type 6 zinc-finger motif lies at 636 to 671 (QLKCNYCKNSFCSKPEILEWENKVHQFCSKTCSDDY). 2 consecutive MYM-type zinc fingers follow at residues 723–758 (RCVT…CKKF) and 764–799 (KAAR…LLRF). Glycyl lysine isopeptide (Lys-Gly) (interchain with G-Cter in SUMO2) cross-links involve residues lysine 764, lysine 788, lysine 812, and lysine 829. Serine 838 and serine 958 each carry phosphoserine. Disordered stretches follow at residues 983–1002 (LLKN…PYEP) and 1028–1064 (VFGE…SDNS). A compositionally biased stretch (basic residues) spans 1039-1050 (PRSKKKGAKRKA). Serine 1064 carries the post-translational modification Phosphoserine. Threonine 1376 is modified (phosphothreonine).

As to quaternary structure, may be a component of a BHC histone deacetylase complex that contains HDAC1, HDAC2, HMG20B/BRAF35, KDM1A, RCOR1/CoREST, PHF21A/BHC80, ZNF198, ZNF217, ZMYM3, GSE1 and GTF2I.

The protein localises to the nucleus. In terms of biological role, may function as a transcription factor. The polypeptide is Zinc finger MYM-type protein 2 (ZMYM2) (Pongo abelii (Sumatran orangutan)).